Consider the following 315-residue polypeptide: Cell division protein FtsZ (315 aa).

Residues 55 to 57 (GTG), Glu-98, Arg-102, and Asp-146 contribute to the GTP site.

The protein belongs to the FtsZ family. As to quaternary structure, homodimer. Polymerizes to form a dynamic ring structure in a strictly GTP-dependent manner. Interacts directly with several other division proteins.

It is found in the cytoplasm. Functionally, essential cell division protein that forms a contractile ring structure (Z ring) at the future cell division site. The regulation of the ring assembly controls the timing and the location of cell division. One of the functions of the FtsZ ring is to recruit other cell division proteins to the septum to produce a new cell wall between the dividing cells. Binds GTP and shows GTPase activity. The polypeptide is Cell division protein FtsZ (Wolbachia pipientis).